Reading from the N-terminus, the 943-residue chain is Valine--tRNA ligase (943 aa).

Residues 45–55 (PNVTGTLHMGH) carry the 'HIGH' region motif. The 'KMSKS' region motif lies at 541–545 (KMSKS). Residue K544 coordinates ATP. The stretch at 875-934 (IDVAAERIRLAKEIEKLEKQISIAQGKLANEGFVARAPAAVIDQEKQRVADFTATLEQLK) forms a coiled coil.

Belongs to the class-I aminoacyl-tRNA synthetase family. ValS type 1 subfamily. Monomer.

Its subcellular location is the cytoplasm. The catalysed reaction is tRNA(Val) + L-valine + ATP = L-valyl-tRNA(Val) + AMP + diphosphate. Functionally, catalyzes the attachment of valine to tRNA(Val). As ValRS can inadvertently accommodate and process structurally similar amino acids such as threonine, to avoid such errors, it has a 'posttransfer' editing activity that hydrolyzes mischarged Thr-tRNA(Val) in a tRNA-dependent manner. The polypeptide is Valine--tRNA ligase (Dechloromonas aromatica (strain RCB)).